Consider the following 657-residue polypeptide: Pyoverdine export ATP-binding/permease protein PvdT (657 aa).

Residues 6-245 form the ABC transporter domain; the sequence is IDLRGIRKSY…RSVNPAALQA (240 aa). Position 43-50 (43-50) interacts with ATP; the sequence is GASGSGKS. The next 4 helical transmembrane spans lie at 285-305, 539-559, 590-610, and 620-640; these read ALTL…LAVG, IAAI…LMTV, LSVV…AALL, and LPAV…FGFM.

The protein belongs to the ABC transporter superfamily. Macrolide exporter (TC 3.A.1.122) family. As to quaternary structure, part of the tripartite efflux system PvdRT-OpmQ, which is composed of an inner membrane component with both ATPase and permease domains, PvdT, a periplasmic membrane fusion protein, PvdR, and an outer membrane component, OpmQ.

It localises to the cell inner membrane. Its function is as follows. Part of the tripartite efflux system PvdRT-OpmQ required for the secretion into the extracellular milieu of the siderophore pyoverdine (PVD), which is involved in iron acquisition. This subunit binds PVD and drives its secretion by hydrolyzing ATP. The system is responsible for export of newly synthesized PVD after the final steps of biosynthesis have taken place in the periplasm. It is also responsible for recycling of PVD after internalization of ferri-PVD into the periplasm by the outer-membrane receptor FpvA and release of iron from PVD, thus making PVD available for new cycles of iron uptake. The polypeptide is Pyoverdine export ATP-binding/permease protein PvdT (Pseudomonas syringae pv. syringae (strain B728a)).